A 531-amino-acid chain; its full sequence is CTP synthase (531 aa).

Positions 1–267 (MTKYIFVTGG…DQIVCEHLRL (267 aa)) are amidoligase domain. S13 contacts CTP. S13 is a UTP binding site. Residue 14–19 (SLGKGI) participates in ATP binding. L-glutamine is bound at residue Y54. Residue D71 participates in ATP binding. 2 residues coordinate Mg(2+): D71 and E141. Residues 148 to 150 (DIE), 188 to 193 (KTKPTQ), and K224 each bind CTP. UTP contacts are provided by residues 188 to 193 (KTKPTQ) and K224. 240 to 242 (RDA) is an ATP binding site. The region spanning 292-531 (KIALVGKYVE…REFVRASLKE (240 aa)) is the Glutamine amidotransferase type-1 domain. Residue G354 participates in L-glutamine binding. The Nucleophile; for glutamine hydrolysis role is filled by C381. L-glutamine-binding positions include 382 to 385 (LGMQ), E405, and R462. Active-site residues include H507 and E509.

It belongs to the CTP synthase family. In terms of assembly, homotetramer.

The catalysed reaction is UTP + L-glutamine + ATP + H2O = CTP + L-glutamate + ADP + phosphate + 2 H(+). The enzyme catalyses L-glutamine + H2O = L-glutamate + NH4(+). It catalyses the reaction UTP + NH4(+) + ATP = CTP + ADP + phosphate + 2 H(+). It participates in pyrimidine metabolism; CTP biosynthesis via de novo pathway; CTP from UDP: step 2/2. Its activity is regulated as follows. Allosterically activated by GTP, when glutamine is the substrate; GTP has no effect on the reaction when ammonia is the substrate. The allosteric effector GTP functions by stabilizing the protein conformation that binds the tetrahedral intermediate(s) formed during glutamine hydrolysis. Inhibited by the product CTP, via allosteric rather than competitive inhibition. Catalyzes the ATP-dependent amination of UTP to CTP with either L-glutamine or ammonia as the source of nitrogen. Regulates intracellular CTP levels through interactions with the four ribonucleotide triphosphates. This Geobacillus kaustophilus (strain HTA426) protein is CTP synthase.